A 337-amino-acid polypeptide reads, in one-letter code: Ketol-acid reductoisomerase (NADP(+)) (337 aa).

Residues 1 to 180 (MQVYYDKDAD…GGTKGGVIET (180 aa)) enclose the KARI N-terminal Rossmann domain. Residues 24–27 (YGSQ), Arg47, and Ser51 contribute to the NADP(+) site. His106 is an active-site residue. Gly132 serves as a coordination point for NADP(+). The KARI C-terminal knotted domain maps to 181–326 (TFREETETDL…ARLRAMMPWI (146 aa)). Mg(2+)-binding residues include Asp189, Glu193, Glu225, and Glu229. Substrate is bound at residue Ser250.

The protein belongs to the ketol-acid reductoisomerase family. It depends on Mg(2+) as a cofactor.

It carries out the reaction (2R)-2,3-dihydroxy-3-methylbutanoate + NADP(+) = (2S)-2-acetolactate + NADPH + H(+). The catalysed reaction is (2R,3R)-2,3-dihydroxy-3-methylpentanoate + NADP(+) = (S)-2-ethyl-2-hydroxy-3-oxobutanoate + NADPH + H(+). The protein operates within amino-acid biosynthesis; L-isoleucine biosynthesis; L-isoleucine from 2-oxobutanoate: step 2/4. It functions in the pathway amino-acid biosynthesis; L-valine biosynthesis; L-valine from pyruvate: step 2/4. Functionally, involved in the biosynthesis of branched-chain amino acids (BCAA). Catalyzes an alkyl-migration followed by a ketol-acid reduction of (S)-2-acetolactate (S2AL) to yield (R)-2,3-dihydroxy-isovalerate. In the isomerase reaction, S2AL is rearranged via a Mg-dependent methyl migration to produce 3-hydroxy-3-methyl-2-ketobutyrate (HMKB). In the reductase reaction, this 2-ketoacid undergoes a metal-dependent reduction by NADPH to yield (R)-2,3-dihydroxy-isovalerate. The polypeptide is Ketol-acid reductoisomerase (NADP(+)) (Neisseria gonorrhoeae (strain ATCC 700825 / FA 1090)).